Here is a 1011-residue protein sequence, read N- to C-terminus: MKTFFCNRTVDKGEMKRLIKWVLLNYGTEKTTRLIDKLKTMGFHYATHAGISLGIDDLSIPPIKSAFLLNAENDIYENDLRLKRGQITSVQRLEKALDIWNTTNDTLKTEVVKYFRSTDIFNPVYMMAFSGARGNISQVRQLVGMRGLMADPQGQILDFPIRRNFREGLTVTEYMISCYGARKGLVDTALRTASSGYLTRRLVDVAQSVIIQQVDCQTTQGLRIVPELEKIESQLIGRVLFEDVVDLETGRMVGYKNQDISPALALKLIKQPALTIRSPLTCRFHAVCQLCYGWNLAQQKLVQLGEAVGVLAAQSIGEPGTQLTMRTFHTGGVFAGEATEKVYSPHNGIVFYSKQARGRKIVSKYGEVAFLTFEPLKVKIKNDNTTSVLEFPSFTLLYIPPGQTVGEHQSLAELSRIENKQNFQQFEVGTENVQKEFMSNCSGQIFLPQRQNALINEDNAGTTTFNYSEMWLLAGKILDSKTLVPGDQIKNALYPIRSKINCEPSRLTTTLPLGYVFPIDSNQTSLSKLQSTDAETLKQLPLLQFSKLSADNLKFARSYALELNKTLFHCDSLSKYRFITSDLEHLPFKSKNLFFNQDTPTKKVPTFKIKFSRFGKADKFNAKEKFLLLRSVTKLVSTQTNPLKTQFANNLFVQNSINKNKKTFLEVVKPLKTFQKKTNFFPSPTHENIKSFNPSLQNGNLMSVDADYVRLNVQYGKGFSSLLNCGEVRATNCMMTEKDQIAFKSPVCDLKMKVGDYARVEDQLTTSTRIPLSGQINFITAENVLFRSVQPYLLVPGSNVVVKHGSLVQENSVLGTLMTSQSTAGDIVQGLPKVDELLEAREPQHKVLTSMHAKLSTLFSQYGKIYGLREGCELSFQKIRQFLVQEVQDVYQSQGVYIGDKHVEIIVRQMTTHVVVVDAGKTGLLPGDIVDIRRIEQLEHTGFFAGVKYRPMLLGITRAALMAESFISAASFQETKRVLSKAALEGQIDWLTGLKENVILGRLIPAGTGLY.

Positions 216, 282, 288, and 291 each coordinate Zn(2+).

The protein belongs to the RNA polymerase beta' chain family. RpoC2 subfamily. As to quaternary structure, in plastids the minimal PEP RNA polymerase catalytic core is composed of four subunits: alpha, beta, beta', and beta''. When a (nuclear-encoded) sigma factor is associated with the core the holoenzyme is formed, which can initiate transcription. Zn(2+) serves as cofactor.

The protein localises to the plastid. It localises to the chloroplast. The enzyme catalyses RNA(n) + a ribonucleoside 5'-triphosphate = RNA(n+1) + diphosphate. In terms of biological role, DNA-dependent RNA polymerase catalyzes the transcription of DNA into RNA using the four ribonucleoside triphosphates as substrates. The chain is DNA-directed RNA polymerase subunit beta'' from Ostreococcus tauri.